Here is a 187-residue protein sequence, read N- to C-terminus: Virulence protein ATR13 (187 aa).

The N-terminal stretch at 1–19 (MRLVHAVLLPGIIVFVSNG) is a signal peptide. Positions 38 to 41 (RQLR) match the RxLR motif. Residues 50–92 (LSRASFGLGKAQDPLDKFFRKIINSRKPIETSYSAKGIHEKII) form a leucine heptad repeat region region. 4 consecutive repeat copies span residues 93 to 103 (KAYDRHVFESK), 104 to 114 (KAHDRHVSKSK), 115 to 125 (KAHGRHVSKSK), and 126 to 136 (MAHDRHVSKSE). The 4 X 11 AA tandem repeats stretch occupies residues 93–136 (KAYDRHVFESKKAHDRHVSKSKKAHGRHVSKSKMAHDRHVSKSE). The interval 104-136 (KAHDRHVSKSKKAHGRHVSKSKMAHDRHVSKSE) is disordered. Over residues 111-125 (SKSKKAHGRHVSKSK) the composition is skewed to basic residues. Residues 126 to 136 (MAHDRHVSKSE) are compositionally biased toward basic and acidic residues. The interval 137 to 187 (KAPIQYASVADYLKKIYPGTDIERIVSTLKRHDEVGAKDLGAKLQTAVASQ) is highly variable C-terminus domain.

The protein belongs to the RxLR effector family.

The protein localises to the secreted. Its subcellular location is the host nucleus. It is found in the host nucleolus. The protein resides in the host cytoplasm. Functionally, secreted effector that acts as an elicitor of hypersensitive response (HR) specifically on plants carrying defense protein RPP13. Recognition of ATR13 by RPP13 initiates defense responses that are effective against oomycete, bacterial and viral pathogens. Due to high polymorphism, ATR13-Emoy2 does not recognize RPP13-Nd, the RPP13 defense protein from Arabidopsis thaliana ecotype Niederzenz. ATR13-Emoy2 is recognized by RPP13 variants RPP13-UKID44, RPP13-UKID65 and RPP13-UKID71. The chain is Virulence protein ATR13 from Hyaloperonospora arabidopsidis (strain Emoy2) (Downy mildew agent).